We begin with the raw amino-acid sequence, 345 residues long: MFSSLYPLARASLFKMDAEDAHHLTLRALGAAGRTGLACALSARVPDAPRTVMGLTFRNPVGLAAGLDKDGAAIDGLAALGFGFIEVGTVTPRAQPGNPRPRMFRLPQAEALINRMGFNNHGVDQFVKNVQAARYRGILGLNIGKNADTPIERAADDYLYCLERVYPFASYVTINISSPNTKNLRQLQGAGELDALLAALKDKQQRLADLHGKLVPLALKIAPDLDDEQVKAIADTLLRHKIEAVIATNTTLSRAAVQGLPHADEAGGLSGRPVFDASNEVIRKLHAEVGSAVPIIGVGGIFSGDDARAKLAAGASLVQLYTGFIYRGPALVAECVKAIARERAA.

Residues 65–69 and Thr89 contribute to the FMN site; that span reads AGLDK. Substrate is bound at residue Lys69. 114–118 contacts substrate; it reads NRMGF. 2 residues coordinate FMN: Asn142 and Asn175. Asn175 lines the substrate pocket. Residue Ser178 is the Nucleophile of the active site. Asn180 contributes to the substrate binding site. Positions 220 and 248 each coordinate FMN. 249–250 is a binding site for substrate; sequence NT. FMN is bound by residues Gly271, Gly300, and 321–322; that span reads YT.

It belongs to the dihydroorotate dehydrogenase family. Type 2 subfamily. In terms of assembly, monomer. FMN serves as cofactor.

It localises to the cell membrane. The enzyme catalyses (S)-dihydroorotate + a quinone = orotate + a quinol. The protein operates within pyrimidine metabolism; UMP biosynthesis via de novo pathway; orotate from (S)-dihydroorotate (quinone route): step 1/1. Functionally, catalyzes the conversion of dihydroorotate to orotate with quinone as electron acceptor. The chain is Dihydroorotate dehydrogenase (quinone) from Burkholderia multivorans (strain ATCC 17616 / 249).